The chain runs to 124 residues: Small ribosomal subunit protein uS12 (124 aa).

3-methylthioaspartic acid is present on Asp89. Residues 103–124 (DTAGVKDRRQSRSKYGAKSPKE) are disordered.

This sequence belongs to the universal ribosomal protein uS12 family. In terms of assembly, part of the 30S ribosomal subunit. Contacts proteins S8 and S17. May interact with IF1 in the 30S initiation complex.

Its function is as follows. With S4 and S5 plays an important role in translational accuracy. Interacts with and stabilizes bases of the 16S rRNA that are involved in tRNA selection in the A site and with the mRNA backbone. Located at the interface of the 30S and 50S subunits, it traverses the body of the 30S subunit contacting proteins on the other side and probably holding the rRNA structure together. The combined cluster of proteins S8, S12 and S17 appears to hold together the shoulder and platform of the 30S subunit. In Prochlorococcus marinus (strain NATL1A), this protein is Small ribosomal subunit protein uS12.